Here is a 399-residue protein sequence, read N- to C-terminus: Elongation factor Tu (399 aa).

The 198-residue stretch at 10–207 folds into the tr-type G domain; that stretch reads KTHMNVGTIG…AVDSYFPDPV (198 aa). The tract at residues 19-26 is G1; sequence GHIDHGKT. 19–26 contributes to the GTP binding site; it reads GHIDHGKT. Thr-26 lines the Mg(2+) pocket. A G2 region spans residues 60–64; it reads GITIN. The segment at 81–84 is G3; that stretch reads DCPG. GTP contacts are provided by residues 81 to 85 and 136 to 139; these read DCPGH and NKVD. The G4 stretch occupies residues 136-139; sequence NKVD. Residues 174-176 are G5; that stretch reads SAL.

The protein belongs to the TRAFAC class translation factor GTPase superfamily. Classic translation factor GTPase family. EF-Tu/EF-1A subfamily. Monomer.

The protein resides in the cytoplasm. The enzyme catalyses GTP + H2O = GDP + phosphate + H(+). Its function is as follows. GTP hydrolase that promotes the GTP-dependent binding of aminoacyl-tRNA to the A-site of ribosomes during protein biosynthesis. The chain is Elongation factor Tu from Petrotoga mobilis (strain DSM 10674 / SJ95).